The following is a 196-amino-acid chain: Probable GTP-binding protein EngB (196 aa).

One can recognise an EngB-type G domain in the interval 22-193 (SLPEVAFVGR…LEEIRKAKGE (172 aa)). Residues 30–37 (GRSNVGKS), 57–61 (GRTQL), 75–78 (DLPG), 142–145 (TKSD), and 172–174 (FSA) each bind GTP. The Mg(2+) site is built by serine 37 and threonine 59.

This sequence belongs to the TRAFAC class TrmE-Era-EngA-EngB-Septin-like GTPase superfamily. EngB GTPase family. Mg(2+) serves as cofactor.

Necessary for normal cell division and for the maintenance of normal septation. The sequence is that of Probable GTP-binding protein EngB from Syntrophus aciditrophicus (strain SB).